Here is a 549-residue protein sequence, read N- to C-terminus: OBERON-like protein (549 aa).

The segment at 1-56 (MLPPRQQPRPGGLQTSLSLVSPDACGSPNPQERGSTSDQARDSPSESASSRETWPT) is disordered. Composition is skewed to polar residues over residues 28–38 (PNPQERGSTSD) and 45–56 (SESASSRETWPT). The PHD-type zinc finger occupies 224-288 (LCMCVICYKF…LFRCHACSRT (65 aa)). Positions 394 to 520 (VQEAIRKMEA…YLFEKIKLQE (127 aa)) form a coiled coil. The disordered stretch occupies residues 519–549 (QESSRASQSSAGGNDPSQMMYSKIQDLIKNM). The segment covering 521-538 (SSRASQSSAGGNDPSQMM) has biased composition (polar residues).

In terms of assembly, self-interacts and probably forms heteromers. Binds to VPg of pea seed borne mosaic virus (PSbMV), turnip mosaic virus (TuMV) and lettuce mosaic virus (LMV), but not with VPg of tobacco etch virus (TEV), cowpea mosaic virus (CPMV), tomato black ring virus (TBRV) and grapevine fan leaf virus (GFLV).

The protein localises to the nucleus. In terms of biological role, required for the maintenance and/or establishment of both the shoot and root meristems, probably by controlling the expression of the meristem genes and of genes required for auxin responses. Involved in the development of the basal pole and in auxin-mediated root and vascular development in the embryo. Confers sensitivity to turnip mosaic virus (TuMV) probably by promoting viral movement and multiplication via interaction with TuMV VPg. The protein is OBERON-like protein (PVIP) of Nicotiana benthamiana.